Here is a 101-residue protein sequence, read N- to C-terminus: Small ribosomal subunit protein uS14 (101 aa).

This sequence belongs to the universal ribosomal protein uS14 family. In terms of assembly, part of the 30S ribosomal subunit. Contacts proteins S3 and S10.

Binds 16S rRNA, required for the assembly of 30S particles and may also be responsible for determining the conformation of the 16S rRNA at the A site. The chain is Small ribosomal subunit protein uS14 from Psychrobacter arcticus (strain DSM 17307 / VKM B-2377 / 273-4).